The following is a 402-amino-acid chain: 5-methylphenazine-1-carboxylate 1-monooxygenase (402 aa).

Residues 14 to 15 (IG), 35 to 36 (ES), 43 to 45 (LGV), arginine 106, valine 132, arginine 191, and aspartate 310 each bind FAD. The span at 368 to 385 (REKEEWAAASRPKTEKSA) shows a compositional bias: basic and acidic residues. A disordered region spans residues 368-402 (REKEEWAAASRPKTEKSAALEAITGSYRNQVERPR).

As to quaternary structure, monomer in solution. Probably interacts transiently with PhzM. FAD serves as cofactor.

It catalyses the reaction 5-methyl-phenazine-1-carboxylate + NADH + O2 + 2 H(+) = pyocyanin + CO2 + NAD(+) + H2O. The protein operates within secondary metabolite biosynthesis; pyocyanine biosynthesis. Functionally, involved in the biosynthesis of pyocyanine, a blue-pigmented phenazine derivative, which plays a role in virulence. Catalyzes the oxidative decarboxylation of 5-methylphenazine-1-carboxylate (5-methyl-PCA) to pyocyanine. Can also act on phenazine-1-carboxylate (PCA), converting it into 1-hydroxyphenazine (1-HP). However, PCA is a poor substrate. In Pseudomonas aeruginosa (strain ATCC 15692 / DSM 22644 / CIP 104116 / JCM 14847 / LMG 12228 / 1C / PRS 101 / PAO1), this protein is 5-methylphenazine-1-carboxylate 1-monooxygenase.